Reading from the N-terminus, the 189-residue chain is Adenylate kinase (189 aa).

12-17 (GSGKTT) is a binding site for ATP. Residues 33 to 62 (STGDLLRAEVASGSELGKLIDGFISKGNLV) are NMP. Residues Thr-34, Arg-39, 60 to 62 (NLV), 87 to 90 (GYPR), and Gln-94 each bind AMP. The interval 129–135 (GRARGAD) is LID. Arg-130 is an ATP binding site. The AMP site is built by Arg-132 and Arg-144. Arg-172 provides a ligand contact to ATP.

It belongs to the adenylate kinase family. Monomer.

It is found in the cytoplasm. It carries out the reaction AMP + ATP = 2 ADP. It functions in the pathway purine metabolism; AMP biosynthesis via salvage pathway; AMP from ADP: step 1/1. In terms of biological role, catalyzes the reversible transfer of the terminal phosphate group between ATP and AMP. Plays an important role in cellular energy homeostasis and in adenine nucleotide metabolism. This Campylobacter concisus (strain 13826) protein is Adenylate kinase.